Reading from the N-terminus, the 338-residue chain is Glycerol-3-phosphate dehydrogenase [NAD(P)+] (338 aa).

The NADPH site is built by tryptophan 14, tyrosine 50, and lysine 110. Lysine 110, glycine 141, and serine 143 together coordinate sn-glycerol 3-phosphate. NADPH is bound at residue alanine 145. Residues lysine 196, aspartate 249, serine 259, arginine 260, and asparagine 261 each contribute to the sn-glycerol 3-phosphate site. Residue lysine 196 is the Proton acceptor of the active site. Residue arginine 260 coordinates NADPH. An NADPH-binding site is contributed by glutamate 285.

The protein belongs to the NAD-dependent glycerol-3-phosphate dehydrogenase family.

The protein localises to the cytoplasm. The catalysed reaction is sn-glycerol 3-phosphate + NAD(+) = dihydroxyacetone phosphate + NADH + H(+). The enzyme catalyses sn-glycerol 3-phosphate + NADP(+) = dihydroxyacetone phosphate + NADPH + H(+). Its pathway is membrane lipid metabolism; glycerophospholipid metabolism. Its function is as follows. Catalyzes the reduction of the glycolytic intermediate dihydroxyacetone phosphate (DHAP) to sn-glycerol 3-phosphate (G3P), the key precursor for phospholipid synthesis. The sequence is that of Glycerol-3-phosphate dehydrogenase [NAD(P)+] from Malacoplasma penetrans (strain HF-2) (Mycoplasma penetrans).